Here is a 347-residue protein sequence, read N- to C-terminus: Palmitoyltransferase ZDHHC11 (347 aa).

Residues 1–46 lie on the Cytoplasmic side of the membrane; the sequence is MKEMNICGINKNWVLPEAQENNVKKFLPRPLSRVNGWSPPLHSFQA. A helical membrane pass occupies residues 47–67; that stretch reads ISWITYLAMSIVTFGIFIPFL. The Lumenal segment spans residues 68 to 75; it reads PYSWKYAA. The helical transmembrane segment at 76 to 96 threads the bilayer; the sequence is NIVMGGVFIFHLIVHLIAITI. Topologically, residues 97-170 are cytoplasmic; sequence DPADTNVRLK…LNNCVGRRNY (74 aa). Positions 128–178 constitute a DHHC domain; the sequence is QYCHLCEVTASKKAKHCSACNKCVSGFDHHCKWLNNCVGRRNYWFFFWSVA. Cysteine 158 acts as the S-palmitoyl cysteine intermediate in catalysis. The chain crosses the membrane as a helical span at residues 171–191; that stretch reads WFFFWSVASAAVGILGVMIIL. Residues 192–234 lie on the Lumenal side of the membrane; the sequence is CYICIQYFVNPDELRTDPLYKEIISENTWLLFLSLWPVPVKTP. The helical transmembrane segment at 235 to 255 threads the bilayer; the sequence is IVLSIAVMALLLAIASFVMLG. Residues 256–347 are Cytoplasmic-facing; sequence HLLIFHLYLI…SPPKICHSED (92 aa). Residues 291-306 show a composition bias toward basic and acidic residues; the sequence is ELPLQKKGDLPQEKSD. The tract at residues 291–332 is disordered; it reads ELPLQKKGDLPQEKSDNWAWPKSPPRVGSQKFPVSTLSPKSS. Positions 322-331 are enriched in polar residues; that stretch reads FPVSTLSPKS.

Belongs to the DHHC palmitoyltransferase family. In terms of assembly, interacts with IRF3 and STING1; in presence of DNA viruses recruits IRF3 to STING1 promoting IRF3 phosphorylation and activation.

The protein localises to the endosome membrane. The catalysed reaction is L-cysteinyl-[protein] + hexadecanoyl-CoA = S-hexadecanoyl-L-cysteinyl-[protein] + CoA. Functionally, endoplasmic reticulum-localized palmitoyltransferase that could catalyze the addition of palmitate onto various protein substrates and be involved in a variety of cellular processes. Has a palmitoyltransferase activity toward NCDN and regulates NCDN association with endosome membranes through this palmitoylation. May play a role in cell proliferation. In terms of biological role, also has a palmitoyltransferase activity-independent function in DNA virus-triggered and CGAS-mediated innate immune response. Functions as an adapter that recruits IRF3 to STING1 to promote the activation of that key transcriptional regulator of type I interferon (IFN)-dependent immune response. In Mus musculus (Mouse), this protein is Palmitoyltransferase ZDHHC11.